An 88-amino-acid chain; its full sequence is Small ribosomal subunit protein bS20 (88 aa).

A disordered region spans residues 1–21; that stretch reads MANTTSAKKATRKIARRTAVN.

It belongs to the bacterial ribosomal protein bS20 family.

Its function is as follows. Binds directly to 16S ribosomal RNA. The polypeptide is Small ribosomal subunit protein bS20 (Agrobacterium fabrum (strain C58 / ATCC 33970) (Agrobacterium tumefaciens (strain C58))).